A 662-amino-acid chain; its full sequence is PAN2-PAN3 deadenylation complex subunit PAN3 (662 aa).

Disordered stretches follow at residues 1-29 (MASA…NAKD) and 53-133 (DPHK…DTVT). The segment at 26–55 (NAKDTLCRNITIYGRCRYEDKGCAFNHDPH) adopts a C3H1-type zinc-finger fold. The span at 75 to 102 (SFTPSLLSSNGSSPTSTPATTKKMTTIS) shows a compositional bias: low complexity. The span at 115–133 (SVVSRSNASTPGLRQDTVT) shows a compositional bias: polar residues. Residues 263–525 (QTLPNTQLPA…NIDVFITGIS (263 aa)) form a pseudokinase domain region. ATP is bound by residues arginine 315, 364 to 371 (DYHPLSKT), and 425 to 426 (SK). A coiled-coil region spans residues 526 to 564 (SQLMSTFDSALHLDDQLTSDLSRELENGRLVRLMAKLNF). Positions 565-662 (VNERPEYEHD…ALMKPARRMH (98 aa)) are knob domain.

The protein belongs to the protein kinase superfamily. PAN3 family. As to quaternary structure, homodimer. Forms a heterotrimer with a catalytic subunit pan2 to form the poly(A)-nuclease (PAN) deadenylation complex. Interacts (via PAM-2 motif) with poly(A)-binding protein pab1 (via PABC domain), conferring substrate specificity of the enzyme complex.

Its subcellular location is the cytoplasm. Functionally, regulatory subunit of the poly(A)-nuclease (PAN) deadenylation complex, one of two cytoplasmic mRNA deadenylases involved in mRNA turnover. PAN specifically shortens poly(A) tails of RNA and the activity is stimulated by poly(A)-binding protein pab1. PAN deadenylation is followed by rapid degradation of the shortened mRNA tails by the CCR4-NOT complex. Deadenylated mRNAs are then degraded by two alternative mechanisms, namely exosome-mediated 3'-5' exonucleolytic degradation, or deadenylation-dependent mRNA decaping and subsequent 5'-3' exonucleolytic degradation by xrn1. May also be involved in post-transcriptional maturation of mRNA poly(A) tails. pan3 acts as a positive regulator for PAN activity, recruiting the catalytic subunit pan2 to mRNA via its interaction with RNA and with pab1. The sequence is that of PAN2-PAN3 deadenylation complex subunit PAN3 from Aspergillus fumigatus (strain ATCC MYA-4609 / CBS 101355 / FGSC A1100 / Af293) (Neosartorya fumigata).